A 576-amino-acid chain; its full sequence is Alkaline phosphatase PhoD (576 aa).

The signal sequence occupies residues 1–32; it reads MNSLLHHSFLKTVFSSLAIAIVTSSLSSVTIA. 2 residues coordinate Zn(2+): aspartate 68 and threonine 107. Threonine 107 (phosphothreonine intermediate) is an active-site residue. Residues cysteine 108 and cysteine 144 are joined by a disulfide bond. Substrate is bound by residues asparagine 128 and 188–190; that span reads KDR. Cysteine 248 and cysteine 332 form a disulfide bridge. Zn(2+)-binding residues include aspartate 318, histidine 322, aspartate 363, histidine 364, and histidine 508. A disulfide bridge connects residues cysteine 562 and cysteine 573.

In terms of assembly, monomer. Requires Zn(2+) as cofactor.

It carries out the reaction a phosphate monoester + H2O = an alcohol + phosphate. Functionally, alkaline phosphatase with broad substrate specificity. Has phosphatase activity towards nucleotide and sugar phosphates with a preference to nucleotide phosphates. Has no phosphodiesterase activity. This Zymomonas mobilis subsp. mobilis (strain ATCC 31821 / ZM4 / CP4) protein is Alkaline phosphatase PhoD.